Here is a 523-residue protein sequence, read N- to C-terminus: Probable DNA ligase (523 aa).

Glu210 contacts ATP. The N6-AMP-lysine intermediate role is filled by Lys212. ATP-binding residues include Arg217, Arg232, Glu261, Phe317, Arg388, and Lys394.

It belongs to the ATP-dependent DNA ligase family. It depends on Mg(2+) as a cofactor.

The enzyme catalyses ATP + (deoxyribonucleotide)n-3'-hydroxyl + 5'-phospho-(deoxyribonucleotide)m = (deoxyribonucleotide)n+m + AMP + diphosphate.. Its function is as follows. DNA ligase that seals nicks in double-stranded DNA during DNA replication, DNA recombination and DNA repair. The protein is Probable DNA ligase of Nocardia farcinica (strain IFM 10152).